The following is a 427-amino-acid chain: Glutamate-1-semialdehyde 2,1-aminomutase (427 aa).

Lysine 266 is modified (N6-(pyridoxal phosphate)lysine).

The protein belongs to the class-III pyridoxal-phosphate-dependent aminotransferase family. HemL subfamily. In terms of assembly, homodimer. Pyridoxal 5'-phosphate is required as a cofactor.

It is found in the cytoplasm. It carries out the reaction (S)-4-amino-5-oxopentanoate = 5-aminolevulinate. Its pathway is porphyrin-containing compound metabolism; protoporphyrin-IX biosynthesis; 5-aminolevulinate from L-glutamyl-tRNA(Glu): step 2/2. This Aromatoleum aromaticum (strain DSM 19018 / LMG 30748 / EbN1) (Azoarcus sp. (strain EbN1)) protein is Glutamate-1-semialdehyde 2,1-aminomutase.